Reading from the N-terminus, the 176-residue chain is NAD(P)H-quinone oxidoreductase subunit 6, chloroplastic (176 aa).

The next 5 membrane-spanning stretches (helical) occupy residues 10-30 (FLLV…VLLT), 32-52 (PIYS…FYIL), 61-81 (AQLL…VMFM), 92-112 (LWTL…LSLI), and 152-172 (FFLP…GAIA).

It belongs to the complex I subunit 6 family. NDH is composed of at least 16 different subunits, 5 of which are encoded in the nucleus.

The protein resides in the plastid. Its subcellular location is the chloroplast thylakoid membrane. It carries out the reaction a plastoquinone + NADH + (n+1) H(+)(in) = a plastoquinol + NAD(+) + n H(+)(out). The catalysed reaction is a plastoquinone + NADPH + (n+1) H(+)(in) = a plastoquinol + NADP(+) + n H(+)(out). In terms of biological role, NDH shuttles electrons from NAD(P)H:plastoquinone, via FMN and iron-sulfur (Fe-S) centers, to quinones in the photosynthetic chain and possibly in a chloroplast respiratory chain. The immediate electron acceptor for the enzyme in this species is believed to be plastoquinone. Couples the redox reaction to proton translocation, and thus conserves the redox energy in a proton gradient. The protein is NAD(P)H-quinone oxidoreductase subunit 6, chloroplastic (ndhG) of Pelargonium hortorum (Common geranium).